The primary structure comprises 200 residues: Proteasome subunit beta 2 (200 aa).

Residue methionine 1 is a propeptide, removed in mature form; by autocatalysis. The Nucleophile role is filled by threonine 2.

Belongs to the peptidase T1B family. The 20S proteasome core is composed of 14 alpha and 14 beta subunits that assemble into four stacked heptameric rings, resulting in a barrel-shaped structure. The two inner rings, each composed of seven catalytic beta subunits, are sandwiched by two outer rings, each composed of seven alpha subunits. The catalytic chamber with the active sites is on the inside of the barrel. Has a gated structure, the ends of the cylinder being occluded by the N-termini of the alpha-subunits. Is capped at one or both ends by the proteasome regulatory ATPase, PAN.

It is found in the cytoplasm. It catalyses the reaction Cleavage of peptide bonds with very broad specificity.. The formation of the proteasomal ATPase PAN-20S proteasome complex, via the docking of the C-termini of PAN into the intersubunit pockets in the alpha-rings, triggers opening of the gate for substrate entry. Interconversion between the open-gate and close-gate conformations leads to a dynamic regulation of the 20S proteasome proteolysis activity. In terms of biological role, component of the proteasome core, a large protease complex with broad specificity involved in protein degradation. The polypeptide is Proteasome subunit beta 2 (Pyrobaculum islandicum (strain DSM 4184 / JCM 9189 / GEO3)).